The sequence spans 123 residues: MNAKMALAVAAGGALGALFRFYLSGLLPVYRDFPVGTLMVNGLASFILGYLYGLLFWGFDVPSDWRAFLGTGFCGGLSTFSTFSYETFSLLREREYIMAGLNVAANVFVTISLVFIGFLLARR.

4 consecutive transmembrane segments (helical) span residues 7 to 27 (LAVA…SGLL), 39 to 59 (MVNG…FWGF), 68 to 88 (FLGT…YETF), and 101 to 121 (LNVA…FLLA). Residues Gly75 and Ser78 each coordinate Na(+).

This sequence belongs to the fluoride channel Fluc/FEX (TC 1.A.43) family.

The protein resides in the cell membrane. It catalyses the reaction fluoride(in) = fluoride(out). With respect to regulation, na(+) is not transported, but it plays an essential structural role and its presence is essential for fluoride channel function. Fluoride-specific ion channel. Important for reducing fluoride concentration in the cell, thus reducing its toxicity. This is Fluoride-specific ion channel FluC from Thermococcus gammatolerans (strain DSM 15229 / JCM 11827 / EJ3).